A 156-amino-acid chain; its full sequence is Small ribosomal subunit protein uS7 (156 aa).

The protein belongs to the universal ribosomal protein uS7 family. Part of the 30S ribosomal subunit. Contacts proteins S9 and S11.

Its function is as follows. One of the primary rRNA binding proteins, it binds directly to 16S rRNA where it nucleates assembly of the head domain of the 30S subunit. Is located at the subunit interface close to the decoding center, probably blocks exit of the E-site tRNA. In Mycoplasmopsis pulmonis (strain UAB CTIP) (Mycoplasma pulmonis), this protein is Small ribosomal subunit protein uS7.